We begin with the raw amino-acid sequence, 124 residues long: Large ribosomal subunit protein bL12 (124 aa).

Belongs to the bacterial ribosomal protein bL12 family. In terms of assembly, homodimer. Part of the ribosomal stalk of the 50S ribosomal subunit. Forms a multimeric L10(L12)X complex, where L10 forms an elongated spine to which 2 to 4 L12 dimers bind in a sequential fashion. Binds GTP-bound translation factors.

Forms part of the ribosomal stalk which helps the ribosome interact with GTP-bound translation factors. Is thus essential for accurate translation. The protein is Large ribosomal subunit protein bL12 of Jannaschia sp. (strain CCS1).